Here is a 60-residue protein sequence, read N- to C-terminus: Metallothionein A (60 aa).

Positions 1 to 28 are beta; sequence MDPCECSKSGTCNCGGSCTCTNCSCKSC. A divalent metal cation-binding residues include Cys4, Cys6, Cys12, Cys14, Cys18, Cys20, Cys23, Cys25, Cys28, Cys32, Cys33, Cys35, Cys36, Cys40, Cys43, Cys47, Cys49, Cys54, Cys58, and Cys59. An alpha region spans residues 29–60; sequence KKSCCPCCPSGCTKCASGCVCKGKTCDTSCCQ.

Belongs to the metallothionein superfamily. Type 1 family.

In terms of biological role, metallothioneins have a high content of cysteine residues that bind various heavy metals. This Chionodraco rastrospinosus (Ocellated icefish) protein is Metallothionein A (mta).